We begin with the raw amino-acid sequence, 378 residues long: uncharacterized protein (378 aa).

This is an uncharacterized protein from Nostoc sp. (strain PCC 7120 / SAG 25.82 / UTEX 2576).